Reading from the N-terminus, the 79-residue chain is UPF0291 protein BH2353 (79 aa).

Residues 57–79 form a disordered region; that stretch reads GAGNDVTPDKLKQSKNKYRNDIH. Positions 63 to 79 are enriched in basic and acidic residues; sequence TPDKLKQSKNKYRNDIH.

It belongs to the UPF0291 family.

Its subcellular location is the cytoplasm. The sequence is that of UPF0291 protein BH2353 from Halalkalibacterium halodurans (strain ATCC BAA-125 / DSM 18197 / FERM 7344 / JCM 9153 / C-125) (Bacillus halodurans).